Here is a 186-residue protein sequence, read N- to C-terminus: Probable chorismate pyruvate-lyase (186 aa).

Substrate-binding residues include Arg-80, Leu-118, and Glu-170.

The protein belongs to the UbiC family.

It is found in the cytoplasm. It carries out the reaction chorismate = 4-hydroxybenzoate + pyruvate. It participates in cofactor biosynthesis; ubiquinone biosynthesis. Functionally, removes the pyruvyl group from chorismate, with concomitant aromatization of the ring, to provide 4-hydroxybenzoate (4HB) for the ubiquinone pathway. The polypeptide is Probable chorismate pyruvate-lyase (Pseudomonas savastanoi pv. phaseolicola (strain 1448A / Race 6) (Pseudomonas syringae pv. phaseolicola (strain 1448A / Race 6))).